The chain runs to 676 residues: DNA ligase (676 aa).

Residues 35 to 39 (DNEYD), 84 to 85 (SL), and Glu-115 each bind NAD(+). Catalysis depends on Lys-117, which acts as the N6-AMP-lysine intermediate. Positions 138, 177, 294, and 318 each coordinate NAD(+). Zn(2+) contacts are provided by Cys-412, Cys-415, Cys-430, and Cys-436. The BRCT domain maps to 595–676 (PTRQPLNGES…FLAFLAQYSA (82 aa)).

This sequence belongs to the NAD-dependent DNA ligase family. LigA subfamily. It depends on Mg(2+) as a cofactor. Mn(2+) is required as a cofactor.

It carries out the reaction NAD(+) + (deoxyribonucleotide)n-3'-hydroxyl + 5'-phospho-(deoxyribonucleotide)m = (deoxyribonucleotide)n+m + AMP + beta-nicotinamide D-nucleotide.. Functionally, DNA ligase that catalyzes the formation of phosphodiester linkages between 5'-phosphoryl and 3'-hydroxyl groups in double-stranded DNA using NAD as a coenzyme and as the energy source for the reaction. It is essential for DNA replication and repair of damaged DNA. The protein is DNA ligase of Acinetobacter baylyi (strain ATCC 33305 / BD413 / ADP1).